Consider the following 589-residue polypeptide: Serine/threonine-protein phosphatase 2A 65 kDa regulatory subunit A alpha isoform (589 aa).

Residue Ala-2 is modified to N-acetylalanine. 15 HEAT repeats span residues 8 to 46 (DSLY…GVER), 47 to 84 (TRSE…GGPE), 85 to 123 (YVHC…SPSD), 124 to 161 (LEAH…VSSA), 162 to 200 (VKAE…ELDN), 201 to 239 (VKSE…PQED), 240 to 278 (LEAL…GPEI), 279 to 321 (TKTD…RENV), 322 to 360 (IMTQ…GKDS), 361 to 399 (TIEH…GIRQ), 400 to 438 (LSQS…GVEF), 439 to 477 (FDEK…GKEW), 478 to 516 (AHAT…GQDI), 517 to 555 (TTKH…DNST), and 556 to 589 (LQSE…LSLA). Residues 8-399 (DSLYPIAVLI…CVNEVIGIRQ (392 aa)) are PP2A subunit B binding. The segment at 47–321 (TRSELLPFLT…NLSADCRENV (275 aa)) is polyoma small and medium T antigens Binding. The segment at 85 to 239 (YVHCLLPPLE…NIAQLLPQED (155 aa)) is SV40 small T antigen binding. Lys-280 is modified (N6-acetyllysine). A PP2A subunit C binding region spans residues 400 to 589 (LSQSLLPAIV…QEALTVLSLA (190 aa)).

It belongs to the phosphatase 2A regulatory subunit A family. As to quaternary structure, PP2A consists of a common heterodimeric core enzyme, composed of PPP2CA a 36 kDa catalytic subunit (subunit C) and PPP2R1A a 65 kDa constant regulatory subunit (PR65 or subunit A), that associates with a variety of regulatory subunits. Proteins that associate with the core dimer include three families of regulatory subunits B (the R2/B/PR55/B55, R3/B''/PR72/PR130/PR59 and R5/B'/B56 families), the 48 kDa variable regulatory subunit, viral proteins, and cell signaling molecules. Found in a complex with at least ARL2, PPP2CB, PPP2R1A, PPP2R2A, PPP2R5E and TBCD. Interacts with the PP2A C catalytic subunit PPP2CA. Interacts with the PP2A B subunit PPP2R2A. Interacts with the PP2A B subunit PPP2R5D. Interacts with FOXO1; the interaction dephosphorylates FOXO1 on AKT-mediated phosphorylation sites. Interacts with IPO9. Interacts with TP53 and SGO1. Interacts with PLA2G16; this interaction might decrease PP2A activity. Interacts with CTTNBP2NL. Interacts with GNA12; the interaction promotes protein phosphatase 2A activation causing dephosphorylation of MAPT. Interacts with CIP2A; this interaction stabilizes CIP2A. Interacts with PABIR1/FAM122A. Interacts with ADCY8; antagonizes interaction between ADCY8 and calmodulin. Interacts with CRTC3 (when phosphorylated at 'Ser-391'). Interacts with SPRY2. Part of the core of STRIPAK complexes composed of PP2A catalytic and scaffolding subunits, the striatins (PP2A regulatory subunits), the striatin-associated proteins MOB4, STRIP1 and STRIP2, PDCD10 and members of the STE20 kinases, such as STK24 and STK26. Component of the Integrator-PP2A (INTAC) complex, composed of the Integrator core complex and protein phosphatase 2A subunits PPP2CA and PPP2R1A.

It localises to the cytoplasm. Its subcellular location is the nucleus. The protein resides in the chromosome. The protein localises to the centromere. It is found in the lateral cell membrane. It localises to the cell projection. Its subcellular location is the dendrite. The PR65 subunit of protein phosphatase 2A serves as a scaffolding molecule to coordinate the assembly of the catalytic subunit and a variable regulatory B subunit. Upon interaction with GNA12 promotes dephosphorylation of microtubule associated protein TAU/MAPT. Required for proper chromosome segregation and for centromeric localization of SGO1 in mitosis. Together with RACK1 adapter, mediates dephosphorylation of AKT1 at 'Ser-473', preventing AKT1 activation and AKT-mTOR signaling pathway. Dephosphorylation of AKT1 is essential for regulatory T-cells (Treg) homeostasis and stability. Part of the striatin-interacting phosphatase and kinase (STRIPAK) complexes. STRIPAK complexes have critical roles in protein (de)phosphorylation and are regulators of multiple signaling pathways including Hippo, MAPK, nuclear receptor and cytoskeleton remodeling. Different types of STRIPAK complexes are involved in a variety of biological processes such as cell growth, differentiation, apoptosis, metabolism and immune regulation. Key mediator of a quality checkpoint during transcription elongation as part of the Integrator-PP2A (INTAC) complex. The INTAC complex drives premature transcription termination of transcripts that are unfavorably configured for transcriptional elongation: within the INTAC complex, acts as a scaffolding subunit for PPP2CA, which catalyzes dephosphorylation of the C-terminal domain (CTD) of Pol II subunit POLR2A/RPB1 and SUPT5H/SPT5, thereby preventing transcriptional elongation. Regulates the recruitment of the SKA complex to kinetochores. The polypeptide is Serine/threonine-protein phosphatase 2A 65 kDa regulatory subunit A alpha isoform (PPP2R1A) (Bos taurus (Bovine)).